Consider the following 197-residue polypeptide: Xanthine phosphoribosyltransferase (197 aa).

Xanthine contacts are provided by L20 and T27. 128–132 lines the 5-phospho-alpha-D-ribose 1-diphosphate pocket; that stretch reads ANGQA. K156 is a binding site for xanthine.

It belongs to the purine/pyrimidine phosphoribosyltransferase family. Xpt subfamily. As to quaternary structure, homodimer.

Its subcellular location is the cytoplasm. The enzyme catalyses XMP + diphosphate = xanthine + 5-phospho-alpha-D-ribose 1-diphosphate. It functions in the pathway purine metabolism; XMP biosynthesis via salvage pathway; XMP from xanthine: step 1/1. Converts the preformed base xanthine, a product of nucleic acid breakdown, to xanthosine 5'-monophosphate (XMP), so it can be reused for RNA or DNA synthesis. The protein is Xanthine phosphoribosyltransferase of Lactococcus lactis subsp. cremoris (strain SK11).